The following is a 212-amino-acid chain: Acyl-homoserine-lactone synthase (212 aa).

This sequence belongs to the autoinducer synthase family.

The enzyme catalyses a fatty acyl-[ACP] + S-adenosyl-L-methionine = an N-acyl-L-homoserine lactone + S-methyl-5'-thioadenosine + holo-[ACP] + H(+). Functionally, required for the synthesis of OHHL (N-(3-oxohexanoyl)-L-homoserine lactone), an autoinducer molecule which binds to the EchR transcriptional regulator. The polypeptide is Acyl-homoserine-lactone synthase (echI) (Dickeya chrysanthemi (Pectobacterium chrysanthemi)).